We begin with the raw amino-acid sequence, 813 residues long: Protein mac-1 (813 aa).

Coiled-coil stretches lie at residues 58-89 (VREA…VQEI) and 122-152 (SDDS…TVLN). Disordered stretches follow at residues 97 to 131 (TRKR…ERAA) and 152 to 193 (NLYT…GAVS). The segment covering 158–172 (SAPSTPVSTPKNQAT) has biased composition (polar residues). Positions 175–191 (PPGASAAPPALPRGLGA) are enriched in low complexity. Residues 246–253 (GPPGCGKT) and 575–582 (GPPGCGKT) each bind ATP.

Belongs to the AAA ATPase family. As to quaternary structure, found in a complex composed of ced-3, ced-4 and mac-1 or of ced-9, ced-4 and mac-1. Within the complex, interacts with ced-4.

Probably together with ced-9, plays a modest role in preventing ced-4 and caspase ced-3-mediated apoptosis. In Caenorhabditis elegans, this protein is Protein mac-1.